We begin with the raw amino-acid sequence, 133 residues long: Small ribosomal subunit protein uS9 (133 aa).

Over residues 97-113 (SKQELKSHGFLTRDPRK) the composition is skewed to basic and acidic residues. The segment at 97–133 (SKQELKSHGFLTRDPRKKERKKYGHKKARKSFQFSKR) is disordered. Over residues 114–133 (KERKKYGHKKARKSFQFSKR) the composition is skewed to basic residues.

The protein belongs to the universal ribosomal protein uS9 family.

The polypeptide is Small ribosomal subunit protein uS9 (Chlamydia abortus (strain DSM 27085 / S26/3) (Chlamydophila abortus)).